A 281-amino-acid chain; its full sequence is UPF0500 protein C1orf216 homolog (281 aa).

Residues 1–12 (MFTIQKPDTVSH) show a composition bias toward polar residues. The disordered stretch occupies residues 1-197 (MFTIQKPDTV…SSSDSDSISV (197 aa)). Residues 45-74 (TYDKNENWSQDKKGGEEGENKSKSEDEHSS) show a composition bias toward basic and acidic residues. 3 stretches are compositionally biased toward low complexity: residues 92 to 102 (STGSEGISLSS), 147 to 161 (SSSL…VSAS), and 169 to 178 (PAPTTTPQEN). A compositionally biased stretch (acidic residues) spans 179–190 (PETEDSDVESSS). Residues 198 to 257 (TLSEAFQSLQDKEKLKEREKEKHHAQLTMYRRLALLRWIRALQQKVRDQQNRLQESFDTI) are a coiled coil.

This sequence belongs to the UPF0500 family.

This chain is UPF0500 protein C1orf216 homolog, found in Xenopus laevis (African clawed frog).